We begin with the raw amino-acid sequence, 290 residues long: uncharacterized protein (290 aa).

The protein resides in the cytoplasm. This is an uncharacterized protein from Saccharomyces cerevisiae (strain ATCC 204508 / S288c) (Baker's yeast).